Consider the following 161-residue polypeptide: ATP synthase subunit b' (161 aa).

A helical transmembrane segment spans residues 30–47; it reads VMAIQFLVLAALLNKLFY.

Belongs to the ATPase B chain family. As to quaternary structure, F-type ATPases have 2 components, F(1) - the catalytic core - and F(0) - the membrane proton channel. F(1) has five subunits: alpha(3), beta(3), gamma(1), delta(1), epsilon(1). F(0) has four main subunits: a(1), b(1), b'(1) and c(10-14). The alpha and beta chains form an alternating ring which encloses part of the gamma chain. F(1) is attached to F(0) by a central stalk formed by the gamma and epsilon chains, while a peripheral stalk is formed by the delta, b and b' chains.

It localises to the cellular thylakoid membrane. Functionally, f(1)F(0) ATP synthase produces ATP from ADP in the presence of a proton or sodium gradient. F-type ATPases consist of two structural domains, F(1) containing the extramembraneous catalytic core and F(0) containing the membrane proton channel, linked together by a central stalk and a peripheral stalk. During catalysis, ATP synthesis in the catalytic domain of F(1) is coupled via a rotary mechanism of the central stalk subunits to proton translocation. Its function is as follows. Component of the F(0) channel, it forms part of the peripheral stalk, linking F(1) to F(0). The b'-subunit is a diverged and duplicated form of b found in plants and photosynthetic bacteria. This Picosynechococcus sp. (strain ATCC 27264 / PCC 7002 / PR-6) (Agmenellum quadruplicatum) protein is ATP synthase subunit b'.